Here is a 125-residue protein sequence, read N- to C-terminus: uncharacterized protein (125 aa).

The helical transmembrane segment at 96–113 (LFMMSIVSSYVCYITVLL) threads the bilayer.

The protein localises to the membrane. This is an uncharacterized protein from Saccharomyces cerevisiae (strain ATCC 204508 / S288c) (Baker's yeast).